Reading from the N-terminus, the 164-residue chain is ATP synthase subunit b 1 (164 aa).

The helical transmembrane segment at 8-28 (PETWVAVAFVILMGVFAYFGV) threads the bilayer.

Belongs to the ATPase B chain family. F-type ATPases have 2 components, F(1) - the catalytic core - and F(0) - the membrane proton channel. F(1) has five subunits: alpha(3), beta(3), gamma(1), delta(1), epsilon(1). F(0) has three main subunits: a(1), b(2) and c(10-14). The alpha and beta chains form an alternating ring which encloses part of the gamma chain. F(1) is attached to F(0) by a central stalk formed by the gamma and epsilon chains, while a peripheral stalk is formed by the delta and b chains.

It localises to the cell inner membrane. Its function is as follows. F(1)F(0) ATP synthase produces ATP from ADP in the presence of a proton or sodium gradient. F-type ATPases consist of two structural domains, F(1) containing the extramembraneous catalytic core and F(0) containing the membrane proton channel, linked together by a central stalk and a peripheral stalk. During catalysis, ATP synthesis in the catalytic domain of F(1) is coupled via a rotary mechanism of the central stalk subunits to proton translocation. Component of the F(0) channel, it forms part of the peripheral stalk, linking F(1) to F(0). The polypeptide is ATP synthase subunit b 1 (Rhodopseudomonas palustris (strain BisB18)).